Reading from the N-terminus, the 231-residue chain is Uracil phosphoribosyltransferase (231 aa).

Residue 38 to 42 (KGLVR) coordinates GTP. 5-phospho-alpha-D-ribose 1-diphosphate is bound by residues R87, R112, and 140 to 148 (DPMIATGST). Uracil contacts are provided by residues I203 and 208-210 (GDA). D209 serves as a coordination point for 5-phospho-alpha-D-ribose 1-diphosphate.

The protein belongs to the UPRTase family. Requires Mg(2+) as cofactor.

It carries out the reaction UMP + diphosphate = 5-phospho-alpha-D-ribose 1-diphosphate + uracil. Its pathway is pyrimidine metabolism; UMP biosynthesis via salvage pathway; UMP from uracil: step 1/1. Its activity is regulated as follows. Allosterically activated by GTP. Catalyzes the conversion of uracil and 5-phospho-alpha-D-ribose 1-diphosphate (PRPP) to UMP and diphosphate. The sequence is that of Uracil phosphoribosyltransferase from Methanococcus maripaludis (strain C6 / ATCC BAA-1332).